A 343-amino-acid chain; its full sequence is Glyceraldehyde-3-phosphate dehydrogenase 1 (343 aa).

NAD(+) contacts are provided by residues 13-14 (RI), Asp35, Arg79, and Ser121. D-glyceraldehyde 3-phosphate contacts are provided by residues 154–156 (SCT), Thr185, 214–215 (TG), and Arg237. Cys155 serves as the catalytic Nucleophile. Residue Asn319 coordinates NAD(+).

It belongs to the glyceraldehyde-3-phosphate dehydrogenase family. As to quaternary structure, homotetramer.

Its subcellular location is the cytoplasm. The enzyme catalyses D-glyceraldehyde 3-phosphate + phosphate + NAD(+) = (2R)-3-phospho-glyceroyl phosphate + NADH + H(+). It participates in carbohydrate degradation; glycolysis; pyruvate from D-glyceraldehyde 3-phosphate: step 1/5. Catalyzes the oxidative phosphorylation of glyceraldehyde 3-phosphate (G3P) to 1,3-bisphosphoglycerate (BPG) using the cofactor NAD. The first reaction step involves the formation of a hemiacetal intermediate between G3P and a cysteine residue, and this hemiacetal intermediate is then oxidized to a thioester, with concomitant reduction of NAD to NADH. The reduced NADH is then exchanged with the second NAD, and the thioester is attacked by a nucleophilic inorganic phosphate to produce BPG. The sequence is that of Glyceraldehyde-3-phosphate dehydrogenase 1 (gap1) from Trichormus variabilis (strain ATCC 29413 / PCC 7937) (Anabaena variabilis).